The sequence spans 598 residues: Terpenoid synthase 1 (598 aa).

4 residues coordinate Mg(2+): aspartate 362, aspartate 366, asparagine 494, and aspartate 502. A DDXXD motif motif is present at residues 362 to 366 (DDTCD).

This sequence belongs to the terpene synthase family. Tpsa subfamily. Requires Mg(2+) as cofactor. The cofactor is Mn(2+). Expressed exclusively in siliques.

It localises to the cytoplasm. It functions in the pathway secondary metabolite biosynthesis; terpenoid biosynthesis. This chain is Terpenoid synthase 1 (TPS01), found in Arabidopsis thaliana (Mouse-ear cress).